The following is a 194-amino-acid chain: Xanthine phosphoribosyltransferase (194 aa).

Xanthine contacts are provided by L20 and N27. 128-132 (ANGQA) provides a ligand contact to 5-phospho-alpha-D-ribose 1-diphosphate. K156 serves as a coordination point for xanthine.

It belongs to the purine/pyrimidine phosphoribosyltransferase family. Xpt subfamily. Homodimer.

The protein resides in the cytoplasm. It catalyses the reaction XMP + diphosphate = xanthine + 5-phospho-alpha-D-ribose 1-diphosphate. It participates in purine metabolism; XMP biosynthesis via salvage pathway; XMP from xanthine: step 1/1. In terms of biological role, converts the preformed base xanthine, a product of nucleic acid breakdown, to xanthosine 5'-monophosphate (XMP), so that it can be reused for RNA or DNA synthesis. This Bacillus subtilis (strain 168) protein is Xanthine phosphoribosyltransferase (xpt).